The sequence spans 148 residues: Oleosin 16 kDa (148 aa).

Positions 1–21 (MADQHRGVIGGGGYGDRGGQE) are disordered. Alanine 2 is modified (N-acetylalanine). The tract at residues 2–34 (ADQHRGVIGGGGYGDRGGQEQQEKQPFMMTALK) is polar. The segment covering 8-17 (VIGGGGYGDR) has biased composition (gly residues). Residues 35–106 (TVTAATAGGS…AALSVFSWMY (72 aa)) are hydrophobic. Transmembrane regions (helical) follow at residues 43 to 63 (GSML…LTVA), 66 to 86 (VLVI…LMAA), and 87 to 107 (GFVT…WMYK).

Belongs to the oleosin family.

The protein resides in the lipid droplet. The protein localises to the membrane. Its function is as follows. May have a structural role to stabilize the lipid body during desiccation of the seed by preventing coalescence of the oil. Probably interacts with both lipid and phospholipid moieties of lipid bodies. May also provide recognition signals for specific lipase anchorage in lipolysis during seedling growth. The sequence is that of Oleosin 16 kDa (OLE16) from Oryza sativa subsp. japonica (Rice).